The sequence spans 440 residues: MPIPPPPPPPPGPPPPPTFHQANTEQPKLSRDEQRGRGALLQDICKGTKLKKVTNINDRSAPILEKPKGSSGGYGSGGAALQPKGGLFQGGVLKLRPVGAKDGSENLAGKPALQIPSSRAAAPRPPVSAASGRPQDDTDSSRASLPELPRMQRPSLPDLSRPNTTSSTGMKHSSSAPPPPPPGRRANAPPTPLPMHSSKAPAYNREKPLPPTPGQRLHPGREGPPAPPPVKPPPSPVNIRTGPSGQSLAPPPPPYRQPPGVPNGPSSPTNESAPELPQRHNSLHRKTPGPVRGLAPPPPTSASPSLLSNRPPPPARDPPSRGAAPPPPPPVIRNGARDAPPPPPPYRMHGSEPPSRGKPPPPPSRTPAGPPPPPPPPLRNGHRDSITTVRSFLDDFESKYSFHPVEDFPAPEEYKHFQRIYPSKTNRAARGAPPLPPILR.

Pro residues predominate over residues 1–18 (MPIPPPPPPPPGPPPPPT). Positions 1 to 36 (MPIPPPPPPPPGPPPPPTFHQANTEQPKLSRDEQRG) are disordered. The 18-residue stretch at 36 to 53 (GRGALLQDICKGTKLKKV) folds into the WH2 domain. Arg-37 carries the asymmetric dimethylarginine modification. The segment at 49 to 52 (KLKK) is binds actin. Disordered regions lie at residues 56–387 (INDR…DSIT) and 419–440 (RIYP…PILR). A compositionally biased stretch (low complexity) spans 116-133 (PSSRAAAPRPPVSAASGR). A compositionally biased stretch (polar residues) spans 161–172 (RPNTTSSTGMKH). Composition is skewed to pro residues over residues 176 to 193 (APPP…PTPL), 222 to 236 (EGPP…PPSP), 249 to 262 (APPP…PGVP), and 356 to 378 (RGKP…PPPL).

It belongs to the verprolin family. In terms of assembly, interacts with WASL and WASP, and this interaction results in cytoplasmic relocation of these two proteins along actin filaments. Interacts with NCK2 resulting in the localization to sites of focal adhesions. No interaction was seen with WASF2 and WASF3. As to expression, expressed mainly in brain, colon, lung and stomach (at protein level). Ubiquitously expressed, with high expression in brain, kidney, lung, and placenta.

It is found in the cytoplasm. The protein localises to the cytoskeleton. Functionally, plays an active role in the formation of cell surface protrusions downstream of activated PDGFB receptors. Plays an important role in actin-microspike formation through cooperation with WASL. May cooperate with WASP and WASL to induce mobilization and reorganization of the actin filament system. The polypeptide is WAS/WASL-interacting protein family member 2 (WIPF2) (Homo sapiens (Human)).